We begin with the raw amino-acid sequence, 184 residues long: Translocon-associated protein subunit beta (184 aa).

The N-terminal stretch at 1 to 20 (MNFKTVISLFLVLFVSFVYC) is a signal peptide. The Lumenal portion of the chain corresponds to 21-147 (ENGAELLFHK…SQADYEKRTS (127 aa)). Residue Asn94 is glycosylated (N-linked (GlcNAc...) asparagine). Residues 148–168 (LLIKEWITFFVLCAGAIALPY) traverse the membrane as a helical segment. Residues 169-184 (SISTYYKKNYENGIKK) lie on the Cytoplasmic side of the membrane.

Belongs to the TRAP-beta family. Heterotrimer of TRAP-alpha, TRAP-beta and TRAP-gamma.

It is found in the endoplasmic reticulum membrane. In terms of biological role, TRAP proteins are part of a complex whose function is to bind calcium to the ER membrane and thereby regulate the retention of ER resident proteins. This is Translocon-associated protein subunit beta (ssr2) from Dictyostelium discoideum (Social amoeba).